Here is a 165-residue protein sequence, read N- to C-terminus: 3-hydroxyacyl-[acyl-carrier-protein] dehydratase FabZ (165 aa).

Residue His-68 is part of the active site.

This sequence belongs to the thioester dehydratase family. FabZ subfamily.

The protein resides in the cytoplasm. The catalysed reaction is a (3R)-hydroxyacyl-[ACP] = a (2E)-enoyl-[ACP] + H2O. Its function is as follows. Involved in unsaturated fatty acids biosynthesis. Catalyzes the dehydration of short chain beta-hydroxyacyl-ACPs and long chain saturated and unsaturated beta-hydroxyacyl-ACPs. This chain is 3-hydroxyacyl-[acyl-carrier-protein] dehydratase FabZ, found in Methylobacterium sp. (strain 4-46).